The sequence spans 208 residues: Fucoxanthin-chlorophyll a-c binding protein, chloroplastic (208 aa).

A chloroplast-targeting transit peptide spans 1–31; sequence MMTLASLPSTAIAGLASAAPKVQPRMAANDE. The chain crosses the membrane as a helical span at residues 102 to 118; it reads IPQLPYWLWIVMTIGIG.

This sequence belongs to the fucoxanthin chlorophyll protein family. As to quaternary structure, the LHC complex of chromophytic algae is composed of fucoxanthin, chlorophyll A and C bound non-covalently by fucoxanthin chlorophyll proteins (FCPs). The ratio of pigments in this LHC is; fucoxanthin: chlorophyll C: chlorophyll A; (0.6-1): (0.1-0.3): (1).

The protein resides in the plastid. It localises to the chloroplast thylakoid membrane. In terms of biological role, the light-harvesting complex (LHC) functions as a light receptor, it captures and delivers excitation energy to photosystems with which it is closely associated. Energy is transferred from the carotenoid and chlorophyll C (or B) to chlorophyll A and the photosynthetic reaction centers where it is used to synthesize ATP and reducing power. The sequence is that of Fucoxanthin-chlorophyll a-c binding protein, chloroplastic (FCP) from Isochrysis galbana (Marine planktonic alga).